The primary structure comprises 129 residues: Virion-associated protein (129 aa).

Coiled coils occupy residues 1–31 and 38–59; these read MANL…ILEL and IKES…LIND. Residues 122–129 form a capsid binding region; that stretch reads PAGWPNQF.

It belongs to the caulimovirus ORF III family. Homotetramer, through coiled-coil domain. Homotrimer when bound on icosehadral capsid. Interacts with capsid protein, and with movement protein.

Its subcellular location is the virion. The protein localises to the host cell junction. The protein resides in the host plasmodesma. In terms of biological role, plays a role in virus cell-to-cell and plant-to-plant transmission. Interacts with virion icosahedral capsid and movement protein, thereby facilitating virion cell-to-cell transmission through plasmodesmata opened by viral movement protein. Also interacts with aphid transmission factor, attaching the virion to aphid stylet when the animal feeds on an virus infected plant. Aphid saliva may later detach the virion, inducing release of infectious particles when the animal feeds on a new plant. The sequence is that of Virion-associated protein from Cauliflower mosaic virus (strain Strasbourg) (CaMV).